A 355-amino-acid chain; its full sequence is uncharacterized protein (355 aa).

This sequence belongs to the carbohydrate kinase PfkB family.

This is an uncharacterized protein from Dictyostelium discoideum (Social amoeba).